We begin with the raw amino-acid sequence, 684 residues long: Threonine--tRNA ligase (684 aa).

The 66-residue stretch at 1 to 66 (MSTAASPAPA…DADVEVVPVP (66 aa)) folds into the TGS domain. The interval 261-567 (DHRKLGVELD…LTEHYAGAFP (307 aa)) is catalytic. Zn(2+)-binding residues include Cys366, His417, and His544.

Belongs to the class-II aminoacyl-tRNA synthetase family. In terms of assembly, homodimer. Zn(2+) is required as a cofactor.

The protein resides in the cytoplasm. The catalysed reaction is tRNA(Thr) + L-threonine + ATP = L-threonyl-tRNA(Thr) + AMP + diphosphate + H(+). In terms of biological role, catalyzes the attachment of threonine to tRNA(Thr) in a two-step reaction: L-threonine is first activated by ATP to form Thr-AMP and then transferred to the acceptor end of tRNA(Thr). Also edits incorrectly charged L-seryl-tRNA(Thr). In Mycobacterium sp. (strain KMS), this protein is Threonine--tRNA ligase.